We begin with the raw amino-acid sequence, 1531 residues long: Slit homolog 1 protein (1531 aa).

The signal sequence occupies residues 1–33; it reads MALTPQRGSSSGLSRPELWLLLWAAAWRLGATA. Residues 34–61 enclose the LRRNT domain; sequence CPALCTCTGTTVDCHGTGLQAIPKNIPR. 6 LRR repeats span residues 62–83, 86–107, 110–131, 134–155, 158–179, and 182–203; these read NTER…DFAG, QLRV…AFDD, ELER…LFQN, ALSR…AFRG, DLKN…AFRA, and GLEV…SFNH. An N-linked (GlcNAc...) asparagine glycan is attached at N72. A glycan (N-linked (GlcNAc...) asparagine) is linked at N192. The LRRCT 1 domain maps to 215 to 265; sequence NHLFCDCHLAWLSQWLRQRPTIGLFTQCSGPASLRGLNVAEVQKSEFSCSG. The LRRNT 2 domain occupies 273 to 309; that stretch reads PACTLSSGSCPAMCSCSNGIVDCRGKGLTAIPANLPE. An intrachain disulfide couples C286 to C295. LRR repeat units lie at residues 310–331, 334–355, 358–379, 382–403, and 406–427; these read TMTE…AFSP, KLRR…AFQG, SLNS…VFGG, TLQL…AFQD, and NLSL…TFTS. N406 carries an N-linked (GlcNAc...) asparagine glycan. The 51-residue stretch at 439–489 folds into the LRRCT 2 domain; sequence NPFICDCNLKWLADFLRTNPIETTGARCASPRRLANKRIGQIKSKKFRCSA. 4 cysteine pairs are disulfide-bonded: C443-C466, C445-C487, C513-C519, and C517-C526. The LRRNT 3 domain maps to 504-540; sequence NSECTSDVACPHKCRCEASVVECSGLKLSKIPERIPQ. 5 LRR repeats span residues 541 to 562, 566 to 587, 590 to 611, 614 to 635, and 638 to 659; these read STTE…GLFK, HLKK…TFEG, SVSE…MFRG, GLRT…SFTG, and NVRL…AFDT. The N-linked (GlcNAc...) asparagine glycan is linked to N571. Residue N630 is glycosylated (N-linked (GlcNAc...) asparagine). Residues 671-721 form the LRRCT 3 domain; the sequence is NPFNCNCQLAWLGDWLRKRKIVTGNPRCQNPDFLRQIPLQDVAFPDFRCEE. 2 disulfide bridges follow: C675-C698 and C677-C719. The LRRNT 4 domain maps to 725–761; sequence EVGCLPRPQCPQECACLDTVVRCSNKHLQALPKGIPK. N762, N801, and N806 each carry an N-linked (GlcNAc...) asparagine glycan. LRR repeat units follow at residues 762-783, 785-806, 809-830, and 833-854; these read NVTE…LSTF, YLQL…SFTN, QLTT…AFQG, and SLRL…IFAD. The region spanning 866–916 is the LRRCT 4 domain; that stretch reads NPLYCDCHLRWLSSWVKTGYKEPGIARCAGPPEMEGKLLLTTPAKKFECQG. 6 EGF-like domains span residues 927-962, 964-1003, 1005-1041, 1043-1081, 1083-1119, and 1124-1160; these read DPCL…RNCE, SLDS…LTCG, NTDD…RACE, LVDF…DNCS, NQDD…QLCE, and PRNS…PECE. 18 cysteine pairs are disulfide-bonded: C929–C940, C934–C950, C952–C961, C968–C979, C973–C991, C993–C1002, C1009–C1020, C1014–C1029, C1031–C1040, C1047–C1060, C1054–C1069, C1071–C1080, C1087–C1098, C1092–C1107, C1109–C1118, C1128–C1139, C1133–C1148, and C1150–C1159. Residue N1026 is glycosylated (N-linked (GlcNAc...) asparagine). N1079 is a glycosylation site (N-linked (GlcNAc...) asparagine). The region spanning 1163 to 1336 is the Laminin G-like domain; sequence LSVNFVDRDT…QMKPGVVPGC (174 aa). N-linked (GlcNAc...) asparagine glycosylation is found at N1186, N1256, and N1303. Intrachain disulfides connect C1310-C1336, C1339-C1349, C1344-C1359, C1361-C1370, C1378-C1388, C1383-C1398, C1400-C1409, C1419-C1429, C1424-C1439, C1441-C1450, C1456-C1495, C1474-C1509, C1485-C1525, and C1489-C1527. EGF-like domains lie at 1337-1371, 1374-1410, and 1415-1451; these read EPCR…LHCD, VDGP…ALCN, and VAEP…ELCE. The CTCK domain occupies 1456–1531; that stretch reads CRGDPVRDFH…PTKCGCAPCA (76 aa).

As to quaternary structure, interacts with ROBO1 and GREM1. As to expression, in adult brains expressed in the hippocampus, cerebral cortex, and olfactory bulb but not in the cerebellum. In embryo expressed in cerebral cortex.

The protein resides in the secreted. In terms of biological role, thought to act as molecular guidance cue in cellular migration, and function appears to be mediated by interaction with roundabout homolog receptors. During neural development involved in axonal navigation at the ventral midline of the neural tube and projection of axons to different regions. SLIT1 and SLIT2 together seem to be essential for midline guidance in the forebrain by acting as repulsive signal preventing inappropriate midline crossing by axons projecting from the olfactory bulb. The protein is Slit homolog 1 protein (Slit1) of Rattus norvegicus (Rat).